We begin with the raw amino-acid sequence, 871 residues long: Patatin-like phospholipase domain-containing protein CNBE2340 (871 aa).

The disordered stretch occupies residues 20–53 (NEDSPLSPRSFSLPPESPQLSTASPIHQRVSRKR). The span at 23 to 33 (SPLSPRSFSLP) shows a compositional bias: low complexity. A helical membrane pass occupies residues 68–88 (WPLLFFIFFIIYLEFSAYVIT). In terms of domain architecture, PNPLA spans 243–435 (LCLSGGASFG…REDIPLGSLH (193 aa)). The short motif at 274 to 278 (GTSAG) is the GXSXG element. Ser-276 acts as the Nucleophile in catalysis. Asp-422 serves as the catalytic Proton acceptor. Disordered regions lie at residues 586 to 707 (ALSH…NFGD), 720 to 748 (LSSP…QRFR), and 760 to 871 (VSES…QDGA). Polar residues-rich tracts occupy residues 594–606 (NDPA…TNPE) and 687–706 (PTHS…SNFG). Over residues 721–748 (SSPFRSIRSNTSSSSNNVQSPSSSQRFR) the composition is skewed to low complexity. Residues 798-820 (VESHSDRSEDEMLHSGANVKEEY) are compositionally biased toward basic and acidic residues.

Belongs to the PLPL family.

It localises to the membrane. Probable lipid hydrolase. This is Patatin-like phospholipase domain-containing protein CNBE2340 from Cryptococcus neoformans var. neoformans serotype D (strain B-3501A) (Filobasidiella neoformans).